The chain runs to 237 residues: UPF0688 protein C1orf174 homolog (237 aa).

The tract at residues 1–187 (MRSRKLAGGV…LLDDDSNQPM (187 aa)) is disordered. Residues 11 to 28 (RSSARLRARSCSAASASA) show a composition bias toward low complexity. Polar residues predominate over residues 29-47 (QDTHVTTSAQTACQTPSSH). The span at 48 to 76 (KATDRRTSKKFKYDKGHIVKSELQKHRSD) shows a compositional bias: basic and acidic residues. Residue serine 183 is modified to Phosphoserine.

This sequence belongs to the UPF0688 family.

The protein resides in the nucleus. The chain is UPF0688 protein C1orf174 homolog from Bos taurus (Bovine).